The sequence spans 555 residues: uncharacterized protein (555 aa).

5 helical membrane passes run 13-30 (ALQA…GLGL), 35-57 (FWGV…HFGL), 72-91 (LVIF…FSSF), 98-120 (LNML…SYAT), and 157-179 (TPAL…AVLL). 2 RCK C-terminal domains span residues 188–273 (EDLE…LFGE) and 282–366 (KEDI…VLGN). 6 helical membrane-spanning segments follow: residues 376–398 (LVVI…SIPG), 408–430 (AGGP…MITY), 437–459 (LMLR…GAHF), 469–491 (LLWI…FVAF), 498–517 (FGSV…ALNY), and 532–554 (ATVY…MFLL).

Belongs to the AAE transporter (TC 2.A.81) family.

The protein resides in the cell membrane. This is an uncharacterized protein from Bacteroides thetaiotaomicron (strain ATCC 29148 / DSM 2079 / JCM 5827 / CCUG 10774 / NCTC 10582 / VPI-5482 / E50).